The chain runs to 445 residues: Glutamate--tRNA ligase 1 (445 aa).

Positions 8-18 (PSPTGKLHVGN) match the 'HIGH' region motif. A 'KMSKS' region motif is present at residues 239-243 (KLSKR). Lys242 provides a ligand contact to ATP.

This sequence belongs to the class-I aminoacyl-tRNA synthetase family. Glutamate--tRNA ligase type 1 subfamily. Monomer.

The protein localises to the cytoplasm. The enzyme catalyses tRNA(Glu) + L-glutamate + ATP = L-glutamyl-tRNA(Glu) + AMP + diphosphate. Functionally, catalyzes the attachment of glutamate to tRNA(Glu) in a two-step reaction: glutamate is first activated by ATP to form Glu-AMP and then transferred to the acceptor end of tRNA(Glu). In Maricaulis maris (strain MCS10) (Caulobacter maris), this protein is Glutamate--tRNA ligase 1.